Reading from the N-terminus, the 1018-residue chain is DNA polymerase gamma (1018 aa).

Belongs to the DNA polymerase type-A family. Requires Mg(2+) as cofactor.

The protein resides in the mitochondrion. The enzyme catalyses DNA(n) + a 2'-deoxyribonucleoside 5'-triphosphate = DNA(n+1) + diphosphate. Its function is as follows. Involved in the replication of mitochondrial DNA. This chain is DNA polymerase gamma (mip1), found in Schizosaccharomyces pombe (strain 972 / ATCC 24843) (Fission yeast).